We begin with the raw amino-acid sequence, 265 residues long: V0 assembly protein 1 (265 aa).

The signal sequence occupies residues 1 to 24; it reads MVFGQLYALFIFTLSCCISKTVQA. Residues 25–223 lie on the Vacuolar side of the membrane; sequence DSSKESSSFI…ILSSIWTEGL (199 aa). 3 N-linked (GlcNAc...) asparagine glycosylation sites follow: asparagine 69, asparagine 104, and asparagine 172. The helical transmembrane segment at 224–244 threads the bilayer; the sequence is LMCLIVSALLLFILIVALSWI. The Cytoplasmic segment spans residues 245–265; that stretch reads SNLDITYGALEKSTNPIKKNN. An ER retention motif motif is present at residues 262–265; it reads KKNN.

It belongs to the VOA1 family. In terms of assembly, V-ATPase is a heteromultimeric enzyme composed of a peripheral catalytic V1 complex (components A to H) attached to an integral membrane V0 proton pore complex (components: a, c, c', c'', d, e, f and VOA1). Interacts with VMA21. Associates with the assembling V0 complex.

Its subcellular location is the vacuole membrane. It localises to the endoplasmic reticulum membrane. Its function is as follows. Accessory component of the V0 complex of vacuolar(H+)-ATPase (V-ATPase), a multisubunit enzyme composed of a peripheral complex (V1) that hydrolyzes ATP and a membrane integral complex (V0) that translocates protons. V-ATPase is responsible for acidifying and maintaining the pH of intracellular compartments. Functions with VMA21 in assembly of the V0 complex. This chain is V0 assembly protein 1 (VOA1), found in Saccharomyces cerevisiae (strain ATCC 204508 / S288c) (Baker's yeast).